Reading from the N-terminus, the 128-residue chain is Virion-associated protein (128 aa).

Coiled coils occupy residues 1–30 (MNLA…ILAK) and 37–58 (ESSN…EMKE). The interval 98 to 128 (FDVGNEGMGSSTNPNALKWPPTEKPQPWPPR) is disordered. Residues 119–128 (TEKPQPWPPR) are compositionally biased toward pro residues. Residues 122–128 (PQPWPPR) are capsid binding.

Belongs to the caulimovirus ORF III family. Homotetramer, through coiled-coil domain. Homotrimer when interacts with icosehadral capsid. Interacts with capsid protein, and with Movement protein.

Its subcellular location is the virion. It is found in the host cell junction. It localises to the host plasmodesma. Plays a role in virus cell-to-cell and plant-to-plant transmission. Interacts with virion icosahedral capsid and movement protein, thereby facilitating virion cell-to-cell transmission through plasmodesmata opened by viral movement protein. Also interacts with aphid transmission factor, attaching the virion to aphid stylet when the animal feeds on an virus infected plant. Aphid saliva may later detach the virion, inducing release of infectious particles when the animal feeds on a new plant. The protein is Virion-associated protein of Carnation etched ring virus (CERV).